We begin with the raw amino-acid sequence, 75 residues long: Small ribosomal subunit protein bS16 (75 aa).

Belongs to the bacterial ribosomal protein bS16 family.

The polypeptide is Small ribosomal subunit protein bS16 (Campylobacter lari (strain RM2100 / D67 / ATCC BAA-1060)).